The chain runs to 389 residues: Large envelope protein (389 aa).

M1 is modified (N-acetylmethionine). G2 carries the N-myristoyl glycine; by host lipid modification. The pre-S1 stretch occupies residues 2–108 (GQNLSVTNPL…PPLRDTHPQA (107 aa)). The tract at residues 2–163 (GQNLSVTNPL…FLKTGDPALN (162 aa)) is pre-S. At 2 to 170 (GQNLSVTNPL…ALNMESISSG (169 aa)) the chain is on the virion surface; in external conformation side. Over 2 to 242 (GQNLSVTNPL…PGYRWMCLRR (241 aa)) the chain is Intravirion; in internal conformation. A disordered region spans residues 78 to 105 (PAVPPPASTNRQSGRRPTPISPPLRDTH). The segment at 109 to 163 (MQWNSTVFHQALQDPRVRGLYFPAGGSSSGTVSPVPTTASPISSTFLKTGDPALN) is pre-S2. A helical membrane pass occupies residues 171-191 (FLGPLLVLQAGFFLLTKILTI). At 192–242 (PQSLDSWWTSLNFLGGAPVCPGQNSQSLTSNHSPTSCPPICPGYRWMCLRR) the chain is on the intravirion; in external conformation side. Residues 243-263 (FIIFLFILLLCLIFLLVLLDY) traverse the membrane as a helical segment. The Virion surface portion of the chain corresponds to 264 to 337 (RGMLPVCPLL…WASVRFSWLN (74 aa)). N309 is a glycosylation site (N-linked (GlcNAc...) asparagine; by host). Residues 338–358 (LLVPFVQWFAGLSPTVWLSVI) form a helical membrane-spanning segment. Residues 359 to 364 (WMIWYW) lie on the Intravirion side of the membrane. Residues 365-387 (GPSLYNILSPFIPLLPIFFCLWA) traverse the membrane as a helical segment. At 388–389 (YI) the chain is on the virion surface side.

The protein belongs to the orthohepadnavirus major surface antigen family. In its internal form (Li-HBsAg), interacts with the capsid protein and with the isoform S. Interacts with host chaperone CANX. In terms of assembly, associates with host chaperone CANX through its pre-S2 N glycan; this association may be essential for isoform M proper secretion. As to quaternary structure, interacts with isoform L. Interacts with the antigens of satellite virus HDV (HDVAgs); this interaction is required for encapsidation of HDV genomic RNA. Post-translationally, isoform M is N-terminally acetylated by host at a ratio of 90%, and N-glycosylated by host at the pre-S2 region. In terms of processing, myristoylated.

The protein resides in the virion membrane. The large envelope protein exists in two topological conformations, one which is termed 'external' or Le-HBsAg and the other 'internal' or Li-HBsAg. In its external conformation the protein attaches the virus to cell receptors and thereby initiating infection. This interaction determines the species specificity and liver tropism. This attachment induces virion internalization predominantly through caveolin-mediated endocytosis. The large envelope protein also assures fusion between virion membrane and endosomal membrane. In its internal conformation the protein plays a role in virion morphogenesis and mediates the contact with the nucleocapsid like a matrix protein. In terms of biological role, the middle envelope protein plays an important role in the budding of the virion. It is involved in the induction of budding in a nucleocapsid independent way. In this process the majority of envelope proteins bud to form subviral lipoprotein particles of 22 nm of diameter that do not contain a nucleocapsid. This Pongo pygmaeus (Bornean orangutan) protein is Large envelope protein.